Consider the following 116-residue polypeptide: CDKN2AIP N-terminal-like protein (116 aa).

The residue at position 1 (Met1) is an N-acetylmethionine. The 93-residue stretch at 24 to 116 (AEQFRSYSES…RSELMKKHQS (93 aa)) folds into the XRN2-binding (XTBD) domain.

Belongs to the CARF family. As to quaternary structure, interacts with XRN2; the interaction is direct.

This chain is CDKN2AIP N-terminal-like protein (CDKN2AIPNL), found in Bos taurus (Bovine).